Reading from the N-terminus, the 296-residue chain is Elongation factor Ts (296 aa).

The tract at residues 82 to 85 (TDFV) is involved in Mg(2+) ion dislocation from EF-Tu.

The protein belongs to the EF-Ts family.

Its subcellular location is the cytoplasm. In terms of biological role, associates with the EF-Tu.GDP complex and induces the exchange of GDP to GTP. It remains bound to the aminoacyl-tRNA.EF-Tu.GTP complex up to the GTP hydrolysis stage on the ribosome. In Aromatoleum aromaticum (strain DSM 19018 / LMG 30748 / EbN1) (Azoarcus sp. (strain EbN1)), this protein is Elongation factor Ts.